A 464-amino-acid polypeptide reads, in one-letter code: Cyclic 2,3-diphosphoglycerate synthetase (464 aa).

The protein belongs to the cyclic 2,3-diphosphoglycerate synthetase family.

The protein localises to the cytoplasm. The enzyme catalyses (2R)-2,3-bisphosphoglycerate + ATP + H(+) = cyclic (2R)-2,3-bisphosphoglycerate + ADP + phosphate. With respect to regulation, activity decreases in response to phosphate limitation. Catalyzes the formation of cyclic 2,3-diphosphoglycerate (cDPG) by formation of an intramolecular phosphoanhydride bond at the expense of ATP. Not able to catalyze cDPG hydrolysis. May be involved in osmotic balance. The chain is Cyclic 2,3-diphosphoglycerate synthetase (cpgS) from Methanothermobacter thermautotrophicus (strain ATCC 29096 / DSM 1053 / JCM 10044 / NBRC 100330 / Delta H) (Methanobacterium thermoautotrophicum).